A 490-amino-acid chain; its full sequence is MNLAEICDNAKKGREYALLGNYDSSMVYYQGVIQQIHRHCQSVRDPAVKGKWQQVRQELLEEYEQVKSIVSTLESFKIDKPPDFPVSYQDEPFRDPAVWPPPVPAEHRAPPQIRRPNREVRPLRKDVAGVGARGPVGRAHPISKSEKPSTNKDKDYRARGRDDKGRKNMQDGASDGDILKFDGAGYDKDLVEALERDIVSRNPSIHWDDIADLEEAKKLLREAVVLPMWMPDFFKGIRRPWKGVLMVGPPGTGKTMLAKAVATECGTTFFNVSSSTLTSKYRGESEKLVRLLFEMARFYAPTTIFIDEIDSICSRRGTSDEHEASRRVKSELLIQMDGVGGALENDDPSKMVMVLAATNFPWDIDEALRRRLEKRIYIPLPTAKGRTDLLKINLREVELDPDIQLEDIAEKIEGYSGADITNVCRDASLMAMRRRINGLSPEEIRALSKEELQMPVTKGDFDLALKKIAKSVSDADLEKYEKWMTEFGSA.

At Met-1 the chain carries N-acetylmethionine. The segment at 95 to 178 (DPAVWPPPVP…MQDGASDGDI (84 aa)) is disordered. Residues 116–127 (PNREVRPLRKDV) are compositionally biased toward basic and acidic residues. Residues 128-139 (AGVGARGPVGRA) show a composition bias toward low complexity. Residues 143-169 (SKSEKPSTNKDKDYRARGRDDKGRKNM) are compositionally biased toward basic and acidic residues. Phosphoserine is present on Ser-174. 248–255 (GPPGTGKT) is a binding site for ATP.

Belongs to the AAA ATPase family. Katanin p60 subunit A1 subfamily. A-like 1 sub-subfamily. As to quaternary structure, interacts with KATNB1 and KATNBL1.

The protein resides in the cytoplasm. It localises to the cytoskeleton. It is found in the spindle pole. The protein localises to the spindle. The enzyme catalyses n ATP + n H2O + a microtubule = n ADP + n phosphate + (n+1) alpha/beta tubulin heterodimers.. Regulates microtubule dynamics in Sertoli cells, a process that is essential for spermiogenesis and male fertility. Severs microtubules in an ATP-dependent manner, promoting rapid reorganization of cellular microtubule arrays. Has microtubule-severing activity in vitro. This is Katanin p60 ATPase-containing subunit A-like 1 from Sorex araneus (Eurasian common shrew).